Here is a 325-residue protein sequence, read N- to C-terminus: Methionyl-tRNA formyltransferase (325 aa).

111-114 is a binding site for (6S)-5,6,7,8-tetrahydrofolate; that stretch reads SILP.

The protein belongs to the Fmt family.

It catalyses the reaction L-methionyl-tRNA(fMet) + (6R)-10-formyltetrahydrofolate = N-formyl-L-methionyl-tRNA(fMet) + (6S)-5,6,7,8-tetrahydrofolate + H(+). Functionally, attaches a formyl group to the free amino group of methionyl-tRNA(fMet). The formyl group appears to play a dual role in the initiator identity of N-formylmethionyl-tRNA by promoting its recognition by IF2 and preventing the misappropriation of this tRNA by the elongation apparatus. The protein is Methionyl-tRNA formyltransferase of Microcystis aeruginosa (strain NIES-843 / IAM M-2473).